The following is a 194-amino-acid chain: Adenylate kinase (194 aa).

Position 10-15 (10-15 (GAGKGT)) interacts with ATP. An NMP region spans residues 30-59 (STGDMLRAAVKAETEIGKKAKAVMDAGELV). Residues T31, R36, 57–59 (ELV), 85–88 (GYPR), and Q92 each bind AMP. Positions 126–142 (KRAEDAQAAGQPVRRDD) are LID. R127 is an ATP binding site. R139 and R150 together coordinate AMP. A178 provides a ligand contact to ATP.

This sequence belongs to the adenylate kinase family. As to quaternary structure, monomer.

It is found in the cytoplasm. It carries out the reaction AMP + ATP = 2 ADP. The protein operates within purine metabolism; AMP biosynthesis via salvage pathway; AMP from ADP: step 1/1. Catalyzes the reversible transfer of the terminal phosphate group between ATP and AMP. Plays an important role in cellular energy homeostasis and in adenine nucleotide metabolism. This chain is Adenylate kinase, found in Chelativorans sp. (strain BNC1).